Consider the following 493-residue polypeptide: Glycylpeptide N-tetradecanoyltransferase (493 aa).

The interval 1–30 is disordered; it reads MSDSKDSKGKAPQKPNDAEQTPGGKLTPQA. Tetradecanoyl-CoA is bound by residues 82–85, 216–218, and 224–228; these read FKFW, LCI, and SKRLA. The Proton acceptor; via carboxylate role is filled by Leu493.

This sequence belongs to the NMT family. In terms of assembly, monomer.

Its subcellular location is the cytoplasm. The enzyme catalyses N-terminal glycyl-[protein] + tetradecanoyl-CoA = N-tetradecanoylglycyl-[protein] + CoA + H(+). Its function is as follows. Adds a myristoyl group to the N-terminal glycine residue of certain cellular proteins. The sequence is that of Glycylpeptide N-tetradecanoyltransferase (swoF) from Emericella nidulans (strain FGSC A4 / ATCC 38163 / CBS 112.46 / NRRL 194 / M139) (Aspergillus nidulans).